A 3511-amino-acid chain; its full sequence is Unconventional myosin-XV (3511 aa).

Disordered regions lie at residues M1 to I44, K574 to Q690, F712 to N1030, and V1105 to C1135. Positions S622 to G634 are enriched in polar residues. The segment covering P654–S672 has biased composition (pro residues). Residues P769–L792 are compositionally biased toward low complexity. Pro residues predominate over residues F797–R807. Residues D1206 to E1883 enclose the Myosin motor domain. ATP is bound at residue G1299 to T1306. Positions E1307–A1334 form a coiled coil. The segment at F1776–N1783 is actin-binding. The interval E1872–R2013 is neck or regulatory domain. 2 IQ domains span residues Q1886–S1908 and L1909–K1938. The tract at residues A2014–L3511 is tail. The 147-residue stretch at M2049–Q2195 folds into the MyTH4 1 domain. Disordered regions lie at residues S2330–T2359, Y2392–G2425, P2460–K2509, K2565–F2584, and R2629–D2648. Residues N2337–A2351 are compositionally biased toward polar residues. Residues K2395–S2406 are compositionally biased toward gly residues. Basic and acidic residues predominate over residues D2410 to L2420. Positions P2573–F2584 are enriched in basic and acidic residues. The region spanning K2848–A2934 is the SH3 domain. The tract at residues E2964–D2984 is disordered. Over residues V2965–D2980 the composition is skewed to basic and acidic residues. The region spanning F3031–L3185 is the MyTH4 2 domain. The 322-residue stretch at S3190–L3511 folds into the FERM domain.

The protein belongs to the TRAFAC class myosin-kinesin ATPase superfamily. Myosin family. As to quaternary structure, interacts with the third PDZ domain of WHRN which is necessary for localization of WHRN to stereocilium tips. Interacts with FASLG. Interacts with EPS8. In the developing inner ear, expressed in cochlea and vestibular apparatus. Expression appears to be restricted to cochlear neurosensory cells and upper epithelial layer of macula saccula. Also expressed in macula utriculi and cristae ampullaris of the semicircular canals. In adult cochlear hair cells, highest expression in stereocilia and apical body.

The protein localises to the cell projection. It is found in the stereocilium. The protein resides in the cytoplasm. It localises to the cytoskeleton. Its function is as follows. Myosins are actin-based motor molecules with ATPase activity. Unconventional myosins serve in intracellular movements. Their highly divergent tails are presumed to bind to membranous compartments, which would be moved relative to actin filaments. Required for the arrangement of stereocilia in mature hair bundles. The sequence is that of Unconventional myosin-XV (Myo15a) from Mus musculus (Mouse).